Here is a 290-residue protein sequence, read N- to C-terminus: Type II secretion system protein C (290 aa).

Topologically, residues 1 to 28 (MTLPFRNDLLSSLLARCKTVPLSRFSQP) are cytoplasmic. The chain crosses the membrane as a helical span at residues 29-46 (LFWLLLLLLAHQCAGLTW). Over 47-290 (RLLDLGSQQA…LYDVYVGLSE (244 aa)) the chain is Periplasmic.

The protein belongs to the GSP C family.

Its subcellular location is the cell inner membrane. Involved in a type II secretion system (T2SS, formerly general secretion pathway, GSP) for the export of proteins. The chain is Type II secretion system protein C (exeC) from Aeromonas hydrophila.